The sequence spans 530 residues: uncharacterized protein (530 aa).

Polar residues-rich tracts occupy residues 60–74 and 92–103; these read LNESSLRSQQESSTP and GQGTSRPLPTLS. Disordered regions lie at residues 60-103 and 121-155; these read LNES…PTLS and ASSTNEPQELPDPRDAPREGSFRLDGNQSEFGLGN. Residues 131–142 are compositionally biased toward basic and acidic residues; that stretch reads PDPRDAPREGSF.

This is an uncharacterized protein from Mus musculus (Mouse).